The primary structure comprises 537 residues: Eukaryotic translation initiation factor 3 subunit L (537 aa).

Residues 1-19 show a composition bias toward basic and acidic residues; sequence MSRRVEFDLSTEDHSDRRR. The disordered stretch occupies residues 1–30; it reads MSRRVEFDLSTEDHSDRRRTNTFSSSADED. The PCI domain occupies 299 to 487; sequence EATKMFVNCL…GPSSADDDEP (189 aa).

This sequence belongs to the eIF-3 subunit L family. Component of the eukaryotic translation initiation factor 3 (eIF-3) complex.

It localises to the cytoplasm. Functionally, component of the eukaryotic translation initiation factor 3 (eIF-3) complex, which is involved in protein synthesis of a specialized repertoire of mRNAs and, together with other initiation factors, stimulates binding of mRNA and methionyl-tRNAi to the 40S ribosome. The eIF-3 complex specifically targets and initiates translation of a subset of mRNAs involved in cell proliferation. This is Eukaryotic translation initiation factor 3 subunit L from Caenorhabditis elegans.